The following is a 1101-amino-acid chain: Selenocysteine insertion sequence-binding protein 2-like (1101 aa).

Disordered regions lie at residues 154–206, 240–295, 320–387, 884–1010, and 1030–1101; these read LGQV…AGPD, LWKS…PDSG, QKKP…SESL, TSDG…ISVE, and TLQL…TQTT. Residues 255–265 are compositionally biased toward low complexity; sequence AESSSEQGASE. Residue Ser276 is modified to Phosphoserine. Over residues 327–346 the composition is skewed to polar residues; sequence KNQTFSRGGRQTEQRNNSQV. 2 stretches are compositionally biased toward basic and acidic residues: residues 356–371 and 892–908; these read SSER…DNKH and ENEK…EKPS. The span at 925-939 shows a compositional bias: low complexity; sequence ATGSTTSATSAGKST. A compositionally biased stretch (basic and acidic residues) spans 940–950; the sequence is ASDKEEVKPDD. Polar residues predominate over residues 954–964; that stretch reads ASQQSTETGSL. Positions 988-1002 are enriched in acidic residues; sequence LEEEEDEDEEEEEDY. The span at 1030–1039 shows a compositional bias: polar residues; it reads TLQLGKTLNG. The span at 1040 to 1057 shows a compositional bias: acidic residues; that stretch reads SEEDNVEQSGEEEAEAPE. A compositionally biased stretch (polar residues) spans 1070-1087; it reads ADQQASPGQQKSSNCSSL.

Its function is as follows. Binds SECIS (Sec insertion sequence) elements present on selenocysteine (Sec) protein mRNAs, but does not promote Sec incorporation into selenoproteins in vitro. This Homo sapiens (Human) protein is Selenocysteine insertion sequence-binding protein 2-like (SECISBP2L).